A 357-amino-acid chain; its full sequence is Phosphoserine aminotransferase (357 aa).

Arginine 41 is an L-glutamate binding site. Residues 76–77, tryptophan 102, threonine 152, aspartate 171, and glutamine 194 contribute to the pyridoxal 5'-phosphate site; that span reads GT. Position 195 is an N6-(pyridoxal phosphate)lysine (lysine 195). 235–236 serves as a coordination point for pyridoxal 5'-phosphate; it reads NT.

The protein belongs to the class-V pyridoxal-phosphate-dependent aminotransferase family. SerC subfamily. In terms of assembly, homodimer. It depends on pyridoxal 5'-phosphate as a cofactor.

It localises to the cytoplasm. It carries out the reaction O-phospho-L-serine + 2-oxoglutarate = 3-phosphooxypyruvate + L-glutamate. It catalyses the reaction 4-(phosphooxy)-L-threonine + 2-oxoglutarate = (R)-3-hydroxy-2-oxo-4-phosphooxybutanoate + L-glutamate. Its pathway is amino-acid biosynthesis; L-serine biosynthesis; L-serine from 3-phospho-D-glycerate: step 2/3. Catalyzes the reversible conversion of 3-phosphohydroxypyruvate to phosphoserine and of 3-hydroxy-2-oxo-4-phosphonooxybutanoate to phosphohydroxythreonine. This Limosilactobacillus fermentum (strain NBRC 3956 / LMG 18251) (Lactobacillus fermentum) protein is Phosphoserine aminotransferase.